A 510-amino-acid chain; its full sequence is Protein ERGIC-53 (510 aa).

Positions 1–30 (MAGSRQRGLRARVRPLFCALLLSLGRFVRG) are cleaved as a signal peptide. Residues 31–477 (DGVGGDPAVA…ELPPFPSCLS (447 aa)) are Lumenal-facing. Residues 44–267 (RRFEYKYSFK…DVLSFLTFQL (224 aa)) form the L-type lectin-like domain. S88 and D121 together coordinate a carbohydrate. Residues D152, F154, and N156 each contribute to the Ca(2+) site. Residues N156 and H178 each coordinate a carbohydrate. A Ca(2+)-binding site is contributed by D181. C190 and C230 are joined by a disulfide. Residue 251-253 (GGL) coordinates a carbohydrate. S425 is subject to Phosphoserine. The chain crosses the membrane as a helical span at residues 478–498 (TVHFIIFVVVQTVLFIGYIMY). At 499–510 (RSQQEAAAKKFF) the chain is on the cytoplasmic side. Positions 499–510 (RSQQEAAAKKFF) are mediates interaction with RAB3GAP1, RAB3GAP2 and UBXN6. An ER export motif motif is present at residues 509–510 (FF).

In terms of assembly, exists both as a covalent disulfide-linked homohexamer, and a complex of three disulfide-linked dimers non-covalently kept together. Interacts with MCFD2. May interact with TMEM115. Interacts with RAB3GAP1 and RAB3GAP2. Interacts with UBXN6. Interacts with SERPINA1/alpha1-antitrypsin. Interacts with BET1. The N-terminal may be partly blocked. In terms of tissue distribution, ubiquitous.

It is found in the endoplasmic reticulum-Golgi intermediate compartment membrane. Its subcellular location is the golgi apparatus membrane. The protein localises to the endoplasmic reticulum membrane. In terms of biological role, mannose-specific lectin. May recognize sugar residues of glycoproteins, glycolipids, or glycosylphosphatidyl inositol anchors and may be involved in the sorting or recycling of proteins, lipids, or both. The LMAN1-MCFD2 complex forms a specific cargo receptor for the ER-to-Golgi transport of selected proteins. The protein is Protein ERGIC-53 (LMAN1) of Homo sapiens (Human).